A 126-amino-acid chain; its full sequence is Histone H2B (126 aa).

The segment covering 1–12 (MPEPAKSAPAAK) has biased composition (low complexity). A disordered region spans residues 1–35 (MPEPAKSAPAAKKGSKKAVSKVQKKDGKKRRKSRK). N6-acetyllysine is present on residues K6 and K13. Position 15 is a phosphoserine (S15). K16 and K21 each carry N6-acetyllysine. The O-linked (GlcNAc) serine glycan is linked to S113. A Glycyl lysine isopeptide (Lys-Gly) (interchain with G-Cter in ubiquitin) cross-link involves residue K121.

The protein belongs to the histone H2B family. In terms of assembly, the nucleosome is a histone octamer containing two molecules each of H2A, H2B, H3 and H4 assembled in one H3-H4 heterotetramer and two H2A-H2B heterodimers. The octamer wraps approximately 147 bp of DNA. Post-translationally, monoubiquitination of Lys-121 by BRE1 gives a specific tag for epigenetic transcriptional activation and is also prerequisite for histone H3 'Lys-4' and 'Lys-79' methylation. Phosphorylated on Ser-15 during apoptosis; which facilitates apoptotic chromatin condensation. In terms of processing, glcNAcylation at Ser-113 promotes monoubiquitination of Lys-121. It fluctuates in response to extracellular glucose, and associates with transcribed genes. As to expression, expressed by the skin granular glands.

The protein localises to the nucleus. The protein resides in the secreted. It localises to the chromosome. In terms of biological role, core component of nucleosome. Nucleosomes wrap and compact DNA into chromatin, limiting DNA accessibility to the cellular machineries which require DNA as a template. Histones thereby play a central role in transcription regulation, DNA repair, DNA replication and chromosomal stability. DNA accessibility is regulated via a complex set of post-translational modifications of histones, also called histone code, and nucleosome remodeling. Its function is as follows. Has antibacterial activity against the Gram-negative bacteria E.coli and the Gram-positive bacteria S.aureus. The protein is Histone H2B of Zhangixalus schlegelii (Japanese gliding frog).